Here is a 375-residue protein sequence, read N- to C-terminus: Chaperone protein DnaJ (375 aa).

The J domain maps to 5 to 70; it reads DYYEVLGVAR…NKRRAYDAHG (66 aa). Residues 131–208 form a CR-type zinc finger; sequence GIERRIEIPT…CHGAGRVEED (78 aa). 8 residues coordinate Zn(2+): cysteine 144, cysteine 147, cysteine 160, cysteine 163, cysteine 182, cysteine 185, cysteine 196, and cysteine 199. CXXCXGXG motif repeat units lie at residues 144–151, 160–167, 182–189, and 196–203; these read CAPCHGSG, CGTCHGRG, CPHCDGRG, and CKTCHGAG.

This sequence belongs to the DnaJ family. In terms of assembly, homodimer. Zn(2+) is required as a cofactor.

It localises to the cytoplasm. Functionally, participates actively in the response to hyperosmotic and heat shock by preventing the aggregation of stress-denatured proteins and by disaggregating proteins, also in an autonomous, DnaK-independent fashion. Unfolded proteins bind initially to DnaJ; upon interaction with the DnaJ-bound protein, DnaK hydrolyzes its bound ATP, resulting in the formation of a stable complex. GrpE releases ADP from DnaK; ATP binding to DnaK triggers the release of the substrate protein, thus completing the reaction cycle. Several rounds of ATP-dependent interactions between DnaJ, DnaK and GrpE are required for fully efficient folding. Also involved, together with DnaK and GrpE, in the DNA replication of plasmids through activation of initiation proteins. This chain is Chaperone protein DnaJ, found in Xanthomonas euvesicatoria pv. vesicatoria (strain 85-10) (Xanthomonas campestris pv. vesicatoria).